The chain runs to 344 residues: Laforin, isoform 9 (344 aa).

Disordered stretches follow at residues 1 to 44 (MHPK…PGPG), 58 to 134 (GGGA…PRGH), 158 to 188 (PAPGAERELRPAPPTGASASGRPRRPRRRAS), and 320 to 344 (SLKKTQNDPTNETSVFANPRQQCAT). The span at 77-88 (AARAGALGAARC) shows a compositional bias: low complexity. Over residues 101–131 (RGPGPAGAGPVARGGGAGGRGGGAGRGGAGP) the composition is skewed to gly residues. Positions 179 to 188 (RPRRPRRRAS) are enriched in basic residues.

In terms of assembly, interacts with isoform 1 and isoform 2.

It is found in the nucleus. The polypeptide is Laforin, isoform 9 (Homo sapiens (Human)).